Here is a 332-residue protein sequence, read N- to C-terminus: Ribosomal RNA small subunit methyltransferase C (332 aa).

Belongs to the methyltransferase superfamily. RsmC family. Monomer.

Its subcellular location is the cytoplasm. It catalyses the reaction guanosine(1207) in 16S rRNA + S-adenosyl-L-methionine = N(2)-methylguanosine(1207) in 16S rRNA + S-adenosyl-L-homocysteine + H(+). Functionally, specifically methylates the guanine in position 1207 of 16S rRNA in the 30S particle. This is Ribosomal RNA small subunit methyltransferase C from Pseudomonas putida (strain ATCC 700007 / DSM 6899 / JCM 31910 / BCRC 17059 / LMG 24140 / F1).